The primary structure comprises 935 residues: Kinesin heavy chain (935 aa).

One can recognise a Kinesin motor domain in the interval 5–329; it reads NIKVVCRFRP…LRFGARAKSI (325 aa). ATP is bound by residues 87–94 and 237–244; these read GQTGSGKT and GSEKVGKT. Positions 342–887 form a coiled coil; the sequence is AELKALLKKV…SQKSQNSLAA (546 aa). Disordered regions lie at residues 400-419 and 898-935; these read APGFKSPVSDEGSRPATPVP and RGNGAAIDNGSDDGSLPTSPTDKRDKRSSWMPGFMNSR.

The protein belongs to the TRAFAC class myosin-kinesin ATPase superfamily. Kinesin family. Kinesin subfamily.

Its subcellular location is the cytoplasm. The protein localises to the cytoskeleton. In terms of biological role, kinesin is a microtubule-associated force-producing protein that may play a role in organelle transport. Its motor activity is directed toward the microtubule's plus end. The speed of this motor is 4-5 times faster than its animal counterparts. In Syncephalastrum racemosum (Filamentous fungus), this protein is Kinesin heavy chain.